The chain runs to 205 residues: Peptidyl-tRNA hydrolase (205 aa).

Tyr17 lines the tRNA pocket. Catalysis depends on His22, which acts as the Proton acceptor. 2 residues coordinate tRNA: Tyr73 and Asn75.

This sequence belongs to the PTH family. Monomer.

The protein resides in the cytoplasm. It catalyses the reaction an N-acyl-L-alpha-aminoacyl-tRNA + H2O = an N-acyl-L-amino acid + a tRNA + H(+). Its function is as follows. Hydrolyzes ribosome-free peptidyl-tRNAs (with 1 or more amino acids incorporated), which drop off the ribosome during protein synthesis, or as a result of ribosome stalling. Catalyzes the release of premature peptidyl moieties from peptidyl-tRNA molecules trapped in stalled 50S ribosomal subunits, and thus maintains levels of free tRNAs and 50S ribosomes. The protein is Peptidyl-tRNA hydrolase of Maridesulfovibrio salexigens (strain ATCC 14822 / DSM 2638 / NCIMB 8403 / VKM B-1763) (Desulfovibrio salexigens).